The sequence spans 163 residues: Translation initiation factor IF-3-like (163 aa).

The protein belongs to the IF-3 family.

This Nostoc sp. (strain PCC 7120 / SAG 25.82 / UTEX 2576) protein is Translation initiation factor IF-3-like.